A 503-amino-acid chain; its full sequence is D-xylose-proton symporter-like 1 (503 aa).

Positions 1–23 (MGFDPENQSISSVGQVVGDSSSG) are disordered. The span at 8–23 (QSISSVGQVVGDSSSG) shows a compositional bias: low complexity. 12 helical membrane passes run 51–73 (FLFPALGALLFGYEIGATSCAIM), 95–115 (IITSGSLYGALIGSIVAFSVA), 129–149 (FLYLVGAIVTVVAPVFSILII), 152–172 (VTYGMGIGLTMHAAPMYIAET), 190–210 (VLGMVGGYGIGSLWITVISGW), 213–233 (MYATILPFPVIMGTGMCWLPA), 305–325 (ALTIAGGLVLFQQITGQPSVL), 346–366 (ISILLGLLKLVMTGVSVIVID), 374–394 (LLCGVSGMVISLFLLGSYYMF), 405–425 (ALLLYVGCYQLSFGPIGWLMI), 437–457 (GISLAVLVNFGANALVTFAFS), and 467–487 (ILFCAFGVICVVSLFFIYYIV).

The protein belongs to the major facilitator superfamily. Sugar transporter (TC 2.A.1.1) family.

The protein resides in the membrane. This chain is D-xylose-proton symporter-like 1, found in Arabidopsis thaliana (Mouse-ear cress).